Consider the following 1332-residue polypeptide: DEMETER-like protein 2 (1332 aa).

Residues 1–23 (MEVEGEVREKEARVKGRQPETEV) are compositionally biased toward basic and acidic residues. 3 disordered regions span residues 1 to 29 (MEVEGEVREKEARVKGRQPETEVLHGLPQ), 137 to 242 (VSTS…TSEE), and 280 to 317 (VEGSSGEENLTDTTLGMFGHVPKGRRGQRRSNGFKKTD). The span at 137–153 (VSTSTQRTEPESPQITL) shows a compositional bias: polar residues. Over residues 223–236 (SKAGIKKSSIAATA) the composition is skewed to low complexity. Basic residues predominate over residues 301-312 (PKGRRGQRRSNG). A DEMETER region spans residues 497–595 (KVQLDPETSR…AYMDLAAEFP (99 aa)). A compositionally biased stretch (polar residues) spans 739–753 (HQQDPESTIQTQDQQ). Residues 739 to 810 (HQQDPESTIQ…GGRKRERTER (72 aa)) are disordered. Positions 763-777 (KNRKKPTTSKPKKKS) are enriched in basic residues. Over residues 787-810 (KSVDWDSLRKEAESGGRKRERTER) the composition is skewed to basic and acidic residues. [4Fe-4S] cluster contacts are provided by Cys-970, Cys-977, Cys-980, and Cys-986.

It belongs to the DNA glycosylase family. DEMETER subfamily. [4Fe-4S] cluster is required as a cofactor.

It localises to the nucleus. Its function is as follows. Potential transcriptional activator that may act by nicking the target promoter. Catalyzes the release of 5-methylcytosine (5-meC) from DNA by a glycosylase/lyase mechanism. The chain is DEMETER-like protein 2 (DML2) from Arabidopsis thaliana (Mouse-ear cress).